A 141-amino-acid chain; its full sequence is Small ribosomal subunit protein eS17w (141 aa).

Belongs to the eukaryotic ribosomal protein eS17 family.

The sequence is that of Small ribosomal subunit protein eS17w (RPS17D) from Arabidopsis thaliana (Mouse-ear cress).